Consider the following 521-residue polypeptide: Bifunctional purine biosynthesis protein PurH (521 aa).

In terms of domain architecture, MGS-like spans 1–145; the sequence is MIKQALISVS…KNHRDVTVVV (145 aa).

Belongs to the PurH family.

The enzyme catalyses (6R)-10-formyltetrahydrofolate + 5-amino-1-(5-phospho-beta-D-ribosyl)imidazole-4-carboxamide = 5-formamido-1-(5-phospho-D-ribosyl)imidazole-4-carboxamide + (6S)-5,6,7,8-tetrahydrofolate. It carries out the reaction IMP + H2O = 5-formamido-1-(5-phospho-D-ribosyl)imidazole-4-carboxamide. It participates in purine metabolism; IMP biosynthesis via de novo pathway; 5-formamido-1-(5-phospho-D-ribosyl)imidazole-4-carboxamide from 5-amino-1-(5-phospho-D-ribosyl)imidazole-4-carboxamide (10-formyl THF route): step 1/1. It functions in the pathway purine metabolism; IMP biosynthesis via de novo pathway; IMP from 5-formamido-1-(5-phospho-D-ribosyl)imidazole-4-carboxamide: step 1/1. The polypeptide is Bifunctional purine biosynthesis protein PurH (Burkholderia orbicola (strain AU 1054)).